Here is a 357-residue protein sequence, read N- to C-terminus: 3-isopropylmalate dehydrogenase (357 aa).

The substrate site is built by arginine 97, arginine 107, arginine 135, and aspartate 224. 3 residues coordinate Mg(2+): aspartate 224, aspartate 248, and aspartate 252. Position 282 to 294 (282 to 294 (GSAPDIAGQDKAN)) interacts with NAD(+).

Belongs to the isocitrate and isopropylmalate dehydrogenases family. LeuB type 1 subfamily. Homodimer. Mg(2+) serves as cofactor. Mn(2+) is required as a cofactor.

The protein resides in the cytoplasm. It carries out the reaction (2R,3S)-3-isopropylmalate + NAD(+) = 4-methyl-2-oxopentanoate + CO2 + NADH. The protein operates within amino-acid biosynthesis; L-leucine biosynthesis; L-leucine from 3-methyl-2-oxobutanoate: step 3/4. Its function is as follows. Catalyzes the oxidation of 3-carboxy-2-hydroxy-4-methylpentanoate (3-isopropylmalate) to 3-carboxy-4-methyl-2-oxopentanoate. The product decarboxylates to 4-methyl-2 oxopentanoate. The polypeptide is 3-isopropylmalate dehydrogenase (Synechococcus sp. (strain CC9605)).